A 358-amino-acid polypeptide reads, in one-letter code: Glycerophosphodiester phosphodiesterase, periplasmic (358 aa).

A signal peptide spans 1–25; that stretch reads MKLTLKNLSMAIMMSTIVMGSSAMA. The region spanning 31–355 is the GP-PDE domain; that stretch reads KIVIAHRGAS…DFPDKAVKFL (325 aa). H36 acts as the Proton acceptor in catalysis. Ca(2+)-binding residues include E63 and D65. H78 functions as the Proton donor in the catalytic mechanism. E171 contacts Ca(2+).

Belongs to the glycerophosphoryl diester phosphodiesterase family. Homodimer. The cofactor is Ca(2+).

The protein resides in the periplasm. The enzyme catalyses a sn-glycero-3-phosphodiester + H2O = an alcohol + sn-glycerol 3-phosphate + H(+). Functionally, glycerophosphodiester phosphodiesterase hydrolyzes glycerophosphodiesters into glycerol-3-phosphate (G3P) and the corresponding alcohol. In Escherichia coli (strain K12), this protein is Glycerophosphodiester phosphodiesterase, periplasmic (glpQ).